The sequence spans 250 residues: 5'-nucleotidase SurE (250 aa).

A divalent metal cation contacts are provided by aspartate 8, aspartate 9, serine 40, and asparagine 95.

This sequence belongs to the SurE nucleotidase family. The cofactor is a divalent metal cation.

The protein localises to the cytoplasm. It carries out the reaction a ribonucleoside 5'-phosphate + H2O = a ribonucleoside + phosphate. Its function is as follows. Nucleotidase that shows phosphatase activity on nucleoside 5'-monophosphates. In Nitratidesulfovibrio vulgaris (strain DP4) (Desulfovibrio vulgaris), this protein is 5'-nucleotidase SurE.